A 514-amino-acid polypeptide reads, in one-letter code: F-box-like/WD repeat-containing protein TBL1XR1 (514 aa).

Ser2 carries the post-translational modification N-acetylserine. Residues 4 to 36 enclose the LisH domain; sequence SSDEVNFLVYRYLQESGFSHSAFTFGIESHISQ. The F-box-like domain maps to 41–86; it reads GALVPPAALISIIQKGLQYVEAEVSINEDGTLFDGRPIESLSLIDA. Lys102 bears the N6-acetyllysine mark. Residues 114-139 form a disordered region; the sequence is AAAATNQQGSAKNGENTANGEENGAH. Over residues 124–135 the composition is skewed to low complexity; that stretch reads AKNGENTANGEE. 8 WD repeats span residues 167-206, 223-262, 264-303, 306-344, 347-386, 389-437, 440-479, and 481-513; these read GHES…TSGP, PSNK…ASTL, QHKG…AKQQ, FHSA…PIKT, GHTN…CVHD, AHNK…CIHT, KHQE…LVHS, and RGTG…LDLR. Lys277 is covalently cross-linked (Glycyl lysine isopeptide (Lys-Gly) (interchain with G-Cter in SUMO2)).

It belongs to the WD repeat EBI family. In terms of assembly, component of the N-Cor repressor complex, at least composed of NCOR1, NCOR2, HDAC3, TBL1X, TBL1XR1, CORO2A and GPS2. Probable component of some E3 ubiquitin ligase complex. Interacts with histones H2B and H4. Interacts with MECP2; bridges interaction between MECP2 and NCOR1. Interacts with USP44.

The protein localises to the nucleus. Functionally, F-box-like protein involved in the recruitment of the ubiquitin/19S proteasome complex to nuclear receptor-regulated transcription units. Plays an essential role in transcription activation mediated by nuclear receptors. Probably acts as integral component of the N-Cor corepressor complex that mediates the recruitment of the 19S proteasome complex, leading to the subsequent proteasomal degradation of N-Cor complex, thereby allowing cofactor exchange, and transcription activation. The sequence is that of F-box-like/WD repeat-containing protein TBL1XR1 (Tbl1xr1) from Mus musculus (Mouse).